We begin with the raw amino-acid sequence, 100 residues long: Urease subunit gamma (100 aa).

It belongs to the urease gamma subunit family. In terms of assembly, heterotrimer of UreA (gamma), UreB (beta) and UreC (alpha) subunits. Three heterotrimers associate to form the active enzyme.

The protein localises to the cytoplasm. It catalyses the reaction urea + 2 H2O + H(+) = hydrogencarbonate + 2 NH4(+). It participates in nitrogen metabolism; urea degradation; CO(2) and NH(3) from urea (urease route): step 1/1. The sequence is that of Urease subunit gamma from Micrococcus luteus (strain ATCC 4698 / DSM 20030 / JCM 1464 / CCM 169 / CCUG 5858 / IAM 1056 / NBRC 3333 / NCIMB 9278 / NCTC 2665 / VKM Ac-2230) (Micrococcus lysodeikticus).